The chain runs to 940 residues: Vacuolar protein sorting-associated protein 54 (940 aa).

T30 is subject to Phosphothreonine. A disordered region spans residues 192–218; it reads QQLERDKPLENGAQGAPGPGTGGQTPT. Residues 299–325 are a coiled coil; it reads HAILAEMEQAADQVRQLRAALAELHSH.

The protein belongs to the VPS54 family.

Its subcellular location is the golgi apparatus. It is found in the trans-Golgi network. In terms of biological role, may be involved in retrograde transport from early and late endosomes to late Golgi. Required during spermatogenesis for sperm individualization. This Drosophila melanogaster (Fruit fly) protein is Vacuolar protein sorting-associated protein 54 (scat).